We begin with the raw amino-acid sequence, 604 residues long: Threonine--tRNA ligase (604 aa).

The tract at residues 210–501 (DHRKIGTEME…LTEHYAGEFP (292 aa)) is catalytic. Zn(2+) contacts are provided by Cys302, His353, and His478.

It belongs to the class-II aminoacyl-tRNA synthetase family. As to quaternary structure, homodimer. Zn(2+) serves as cofactor.

It is found in the cytoplasm. The enzyme catalyses tRNA(Thr) + L-threonine + ATP = L-threonyl-tRNA(Thr) + AMP + diphosphate + H(+). In terms of biological role, catalyzes the attachment of threonine to tRNA(Thr) in a two-step reaction: L-threonine is first activated by ATP to form Thr-AMP and then transferred to the acceptor end of tRNA(Thr). Also edits incorrectly charged L-seryl-tRNA(Thr). The polypeptide is Threonine--tRNA ligase (Sulfurovum sp. (strain NBC37-1)).